The primary structure comprises 344 residues: Cell adhesion molecule CEACAM6 (344 aa).

The N-terminal stretch at 1–34 is a signal peptide; it reads MGPPSAPPCRLHVPWKEVLLTASLLTFWNPPTTA. One can recognise an Ig-like V-type domain in the interval 35–142; that stretch reads KLTIESTPFN…EATGQFHVYP (108 aa). 12 N-linked (GlcNAc...) asparagine glycosylation sites follow: Asn-104, Asn-111, Asn-115, Asn-152, Asn-173, Asn-197, Asn-224, Asn-256, Asn-274, Asn-288, Asn-292, and Asn-309. Ig-like C2-type domains follow at residues 145–232 and 240–314; these read PKPS…VTLN and PTIS…TTVT. Cys-167 and Cys-215 are disulfide-bonded. A disulfide bond links Cys-259 and Cys-299. Gly-320 carries the GPI-anchor amidated glycine lipid modification. The propeptide at 321–344 is removed in mature form; that stretch reads SAPVLSAVATVGITIGVLARVALI.

Belongs to the immunoglobulin superfamily. CEA family. As to quaternary structure, homodimer; homodimerizes via its Ig-like V-type domain. Heterodimer with CEACAM8; heterodimerizes via its Ig-like V-type domain. Glycosylated. In terms of tissue distribution, expressed in neutrophils. Expressed in columnar epithelial and goblet cells of the colon. Expressed in numerous tumor cell lines (at protein level).

Its subcellular location is the cell membrane. It is found in the apical cell membrane. It localises to the cell surface. Functionally, cell surface glycoprotein that plays a role in cell adhesion and tumor progression. Intercellular adhesion occurs in a calcium- and fibronectin-independent manner. Mediates homophilic and heterophilic cell adhesion with other carcinoembryonic antigen-related cell adhesion molecules, such as CEACAM5 and CEACAM8. Heterophilic interaction with CEACAM8 occurs in activated neutrophils. Plays a role in neutrophil adhesion to cytokine-activated endothelial cells. Plays a role in cell migration and cell adhesion to endothelial cells. In Homo sapiens (Human), this protein is Cell adhesion molecule CEACAM6.